We begin with the raw amino-acid sequence, 81 residues long: Photosystem I iron-sulfur center (81 aa).

4Fe-4S ferredoxin-type domains follow at residues 2–31 (SHTV…MVPW) and 37–68 (GQIA…VRVY). 8 residues coordinate [4Fe-4S] cluster: Cys-11, Cys-14, Cys-17, Cys-21, Cys-48, Cys-51, Cys-54, and Cys-58.

In terms of assembly, the eukaryotic PSI reaction center is composed of at least 11 subunits. [4Fe-4S] cluster serves as cofactor.

Its subcellular location is the plastid. It localises to the chloroplast thylakoid membrane. It catalyses the reaction reduced [plastocyanin] + hnu + oxidized [2Fe-2S]-[ferredoxin] = oxidized [plastocyanin] + reduced [2Fe-2S]-[ferredoxin]. Functionally, apoprotein for the two 4Fe-4S centers FA and FB of photosystem I (PSI); essential for photochemical activity. FB is the terminal electron acceptor of PSI, donating electrons to ferredoxin. The C-terminus interacts with PsaA/B/D and helps assemble the protein into the PSI complex. Required for binding of PsaD and PsaE to PSI. PSI is a plastocyanin/cytochrome c6-ferredoxin oxidoreductase, converting photonic excitation into a charge separation, which transfers an electron from the donor P700 chlorophyll pair to the spectroscopically characterized acceptors A0, A1, FX, FA and FB in turn. The chain is Photosystem I iron-sulfur center from Thalassiosira pseudonana (Marine diatom).